The sequence spans 691 residues: Elongation factor G (691 aa).

The tr-type G domain occupies 8-282; that stretch reads HMVRNIGIAA…AVVDYLPAPD (275 aa). GTP is bound by residues 17-24, 81-85, and 135-138; these read AHIDAGKT, DTPGH, and NKMD.

The protein belongs to the TRAFAC class translation factor GTPase superfamily. Classic translation factor GTPase family. EF-G/EF-2 subfamily.

It is found in the cytoplasm. Its function is as follows. Catalyzes the GTP-dependent ribosomal translocation step during translation elongation. During this step, the ribosome changes from the pre-translocational (PRE) to the post-translocational (POST) state as the newly formed A-site-bound peptidyl-tRNA and P-site-bound deacylated tRNA move to the P and E sites, respectively. Catalyzes the coordinated movement of the two tRNA molecules, the mRNA and conformational changes in the ribosome. The chain is Elongation factor G from Campylobacter hominis (strain ATCC BAA-381 / DSM 21671 / CCUG 45161 / LMG 19568 / NCTC 13146 / CH001A).